The primary structure comprises 122 residues: Large ribosomal subunit protein bL12 (122 aa).

The protein belongs to the bacterial ribosomal protein bL12 family. Homodimer. Part of the ribosomal stalk of the 50S ribosomal subunit. Forms a multimeric L10(L12)X complex, where L10 forms an elongated spine to which 2 to 4 L12 dimers bind in a sequential fashion. Binds GTP-bound translation factors.

Forms part of the ribosomal stalk which helps the ribosome interact with GTP-bound translation factors. Is thus essential for accurate translation. This is Large ribosomal subunit protein bL12 from Stenotrophomonas maltophilia (strain R551-3).